We begin with the raw amino-acid sequence, 104 residues long: Putative pterin-4-alpha-carbinolamine dehydratase (104 aa).

Belongs to the pterin-4-alpha-carbinolamine dehydratase family.

The enzyme catalyses (4aS,6R)-4a-hydroxy-L-erythro-5,6,7,8-tetrahydrobiopterin = (6R)-L-erythro-6,7-dihydrobiopterin + H2O. This Rhizobium meliloti (strain 1021) (Ensifer meliloti) protein is Putative pterin-4-alpha-carbinolamine dehydratase (pcbD).